The sequence spans 695 residues: Polyribonucleotide nucleotidyltransferase (695 aa).

Aspartate 486 and aspartate 492 together coordinate Mg(2+). The KH domain occupies 553 to 612; it reads PRMIVFKINPEKIRDVIGKGGATIRALTEETGTTIDIVDDGTVKIFSADKADGQEAKRRV. The region spanning 622–690 is the S1 motif domain; sequence GKIYEGRVSR…KQGRVRLSVK (69 aa).

This sequence belongs to the polyribonucleotide nucleotidyltransferase family. As to quaternary structure, component of the RNA degradosome, which is a multiprotein complex involved in RNA processing and mRNA degradation. Mg(2+) serves as cofactor.

The protein localises to the cytoplasm. The enzyme catalyses RNA(n+1) + phosphate = RNA(n) + a ribonucleoside 5'-diphosphate. Its function is as follows. Involved in mRNA degradation. Catalyzes the phosphorolysis of single-stranded polyribonucleotides processively in the 3'- to 5'-direction. The chain is Polyribonucleotide nucleotidyltransferase from Nitrosococcus oceani (strain ATCC 19707 / BCRC 17464 / JCM 30415 / NCIMB 11848 / C-107).